We begin with the raw amino-acid sequence, 670 residues long: Proline-rich receptor-like protein kinase PERK5 (670 aa).

The segment at 1–181 (MADSPVDSSP…SGDSDSSSGN (181 aa)) is disordered. At 1-186 (MADSPVDSSP…SSSGNHPQAN (186 aa)) the chain is on the extracellular side. Positions 14–31 (TSNGTPPSNGTSPSNESS) are enriched in low complexity. Asparagine 22 and asparagine 28 each carry an N-linked (GlcNAc...) asparagine glycan. Pro residues-rich tracts occupy residues 32–62 (PPTPPSSPPPSSISAPPPDISASFSPPPAPP) and 84–109 (PQTPENPSPPAPEGSTPVTPPAPPQT). The N-linked (GlcNAc...) asparagine glycan is linked to asparagine 130. A compositionally biased stretch (low complexity) spans 132 to 141 (TNGGNNNRDG). N-linked (GlcNAc...) asparagine glycosylation occurs at asparagine 151. Positions 167 to 181 (SPPQNSGDSDSSSGN) are enriched in low complexity. The chain crosses the membrane as a helical span at residues 187–207 (IGLIIGVLVGAGLLLLLAVCI). The Cytoplasmic portion of the chain corresponds to 208 to 670 (CICCNRKKKK…RGSMKRNPQL (463 aa)). Threonine 301 carries the phosphothreonine modification. The Protein kinase domain occupies 312–590 (FAQSNLLGQG…VRALEGDMSM (279 aa)). Residues 318–326 (LGQGGFGYV) and lysine 340 contribute to the ATP site. Tyrosine 385 carries the post-translational modification Phosphotyrosine. The Proton acceptor role is filled by aspartate 436. Position 469 is a phosphoserine (serine 469). 2 positions are modified to phosphothreonine: threonine 470 and threonine 475. Tyrosine 483 is modified (phosphotyrosine). Disordered stretches follow at residues 589–613 (SMDDLSEGTRPGQSTYLSPGSVSSE) and 635–670 (EYQSSEYGGTSEYGLNPSASSSEEMNRGSMKRNPQL). Residues 599–613 (PGQSTYLSPGSVSSE) show a composition bias toward polar residues.

The protein belongs to the protein kinase superfamily. Ser/Thr protein kinase family. As to expression, mostly expressed in flower buds.

The protein localises to the cell membrane. It carries out the reaction L-seryl-[protein] + ATP = O-phospho-L-seryl-[protein] + ADP + H(+). The catalysed reaction is L-threonyl-[protein] + ATP = O-phospho-L-threonyl-[protein] + ADP + H(+). The chain is Proline-rich receptor-like protein kinase PERK5 (PERK5) from Arabidopsis thaliana (Mouse-ear cress).